The following is a 622-amino-acid chain: Probable E3 ubiquitin-protein ligase DTX2 (622 aa).

WWE domains are found at residues 8–97 (SLVQ…AVRR) and 98–174 (HLFP…SVRR). Asymmetric dimethylarginine occurs at positions 213, 215, and 233. The residue at position 249 (Lys-249) is an N6-acetyllysine. Disordered stretches follow at residues 249 to 324 (KPSL…VPMQ) and 355 to 393 (APQPTSPPASRLASKSHGSVKRLRKMSVKGATPKPEPEP). An Omega-N-methylarginine modification is found at Arg-256. The span at 274–285 (LGSQPLYRSSLS) shows a compositional bias: polar residues. Over residues 299–322 (SGAVSASLPSGPSSSPGSVPATVP) the composition is skewed to low complexity. Ser-360 is subject to Phosphoserine. Positions 372–381 (GSVKRLRKMS) are enriched in basic residues. An RING-type zinc finger spans residues 412–473 (CIICMEKLST…DGSLQCPSCK (62 aa)).

It belongs to the Deltex family. As to quaternary structure, homodimer. May form a heterodimer with other members of the Deltex family. Interacts with NOTCH1.

It localises to the cytoplasm. The protein resides in the nucleus. It carries out the reaction S-ubiquitinyl-[E2 ubiquitin-conjugating enzyme]-L-cysteine + [acceptor protein]-L-lysine = [E2 ubiquitin-conjugating enzyme]-L-cysteine + N(6)-ubiquitinyl-[acceptor protein]-L-lysine.. It functions in the pathway protein modification; protein ubiquitination. Regulator of Notch signaling, a signaling pathway involved in cell-cell communications that regulates a broad spectrum of cell-fate determinations. Probably acts both as a positive and negative regulator of Notch, depending on the developmental and cell context. Mediates the antineural activity of Notch, possibly by inhibiting the transcriptional activation mediated by MATCH1. Functions as a ubiquitin ligase protein in vitro, suggesting that it may regulate the Notch pathway via some ubiquitin ligase activity. The polypeptide is Probable E3 ubiquitin-protein ligase DTX2 (DTX2) (Homo sapiens (Human)).